The chain runs to 216 residues: Cytochrome c biogenesis ATP-binding export protein CcmA (216 aa).

An ABC transporter domain is found at 18–216; the sequence is LQVEGLAGRR…AHARTLEISA (199 aa). Residue 50 to 57 participates in ATP binding; that stretch reads GHNGSGKT.

The protein belongs to the ABC transporter superfamily. CcmA exporter (TC 3.A.1.107) family. As to quaternary structure, the complex is composed of two ATP-binding proteins (CcmA) and two transmembrane proteins (CcmB).

The protein localises to the cell inner membrane. The enzyme catalyses heme b(in) + ATP + H2O = heme b(out) + ADP + phosphate + H(+). In terms of biological role, part of the ABC transporter complex CcmAB involved in the biogenesis of c-type cytochromes; once thought to export heme, this seems not to be the case, but its exact role is uncertain. Responsible for energy coupling to the transport system. This is Cytochrome c biogenesis ATP-binding export protein CcmA from Nitrosococcus oceani (strain ATCC 19707 / BCRC 17464 / JCM 30415 / NCIMB 11848 / C-107).